Reading from the N-terminus, the 91-residue chain is Small ribosomal subunit protein uS19 (91 aa).

Belongs to the universal ribosomal protein uS19 family.

In terms of biological role, protein S19 forms a complex with S13 that binds strongly to the 16S ribosomal RNA. The protein is Small ribosomal subunit protein uS19 of Verminephrobacter eiseniae (strain EF01-2).